A 461-amino-acid chain; its full sequence is Serine carboxypeptidase-like 45 (461 aa).

A signal peptide spans 1 to 24; that stretch reads MSPLQWLTISFALIIFHSLTVSSS. Cystine bridges form between C86-C340, C243-C261, and C286-C309. Residue N168 is glycosylated (N-linked (GlcNAc...) asparagine). Residue S177 is part of the active site. N-linked (GlcNAc...) asparagine glycosylation occurs at N244. Catalysis depends on residues D377 and H434.

This sequence belongs to the peptidase S10 family. Ubiquitous.

The protein localises to the secreted. Functionally, probable carboxypeptidase. The sequence is that of Serine carboxypeptidase-like 45 (SCPL45) from Arabidopsis thaliana (Mouse-ear cress).